Consider the following 325-residue polypeptide: Phosphate acyltransferase (325 aa).

This sequence belongs to the PlsX family. In terms of assembly, homodimer. Probably interacts with PlsY.

It localises to the cytoplasm. It carries out the reaction a fatty acyl-[ACP] + phosphate = an acyl phosphate + holo-[ACP]. The protein operates within lipid metabolism; phospholipid metabolism. In terms of biological role, catalyzes the reversible formation of acyl-phosphate (acyl-PO(4)) from acyl-[acyl-carrier-protein] (acyl-ACP). This enzyme utilizes acyl-ACP as fatty acyl donor, but not acyl-CoA. This is Phosphate acyltransferase from Staphylococcus epidermidis (strain ATCC 12228 / FDA PCI 1200).